We begin with the raw amino-acid sequence, 144 residues long: Large ribosomal subunit protein uL13 (144 aa).

The protein belongs to the universal ribosomal protein uL13 family. As to quaternary structure, part of the 50S ribosomal subunit.

This protein is one of the early assembly proteins of the 50S ribosomal subunit, although it is not seen to bind rRNA by itself. It is important during the early stages of 50S assembly. The protein is Large ribosomal subunit protein uL13 of Natronomonas pharaonis (strain ATCC 35678 / DSM 2160 / CIP 103997 / JCM 8858 / NBRC 14720 / NCIMB 2260 / Gabara) (Halobacterium pharaonis).